The following is a 117-amino-acid chain: Ribulose bisphosphate carboxylase small subunit 1 (117 aa).

It belongs to the RuBisCO small chain family. Heterohexadecamer of 8 large and 8 small subunits.

Its function is as follows. RuBisCO catalyzes two reactions: the carboxylation of D-ribulose 1,5-bisphosphate, the primary event in carbon dioxide fixation, as well as the oxidative fragmentation of the pentose substrate. Both reactions occur simultaneously and in competition at the same active site. Although the small subunit is not catalytic it is essential for maximal activity. This chain is Ribulose bisphosphate carboxylase small subunit 1, found in Hydrogenovibrio marinus.